Reading from the N-terminus, the 418-residue chain is Glutamyl-tRNA reductase (418 aa).

Substrate-binding positions include 49 to 52 (TCNR), S108, 113 to 115 (EPQ), and Q119. The active-site Nucleophile is the C50. An NADP(+)-binding site is contributed by 188 to 193 (GAGETI).

This sequence belongs to the glutamyl-tRNA reductase family. In terms of assembly, homodimer.

The catalysed reaction is (S)-4-amino-5-oxopentanoate + tRNA(Glu) + NADP(+) = L-glutamyl-tRNA(Glu) + NADPH + H(+). Its pathway is porphyrin-containing compound metabolism; protoporphyrin-IX biosynthesis; 5-aminolevulinate from L-glutamyl-tRNA(Glu): step 1/2. In terms of biological role, catalyzes the NADPH-dependent reduction of glutamyl-tRNA(Glu) to glutamate 1-semialdehyde (GSA). The protein is Glutamyl-tRNA reductase of Aliivibrio salmonicida (strain LFI1238) (Vibrio salmonicida (strain LFI1238)).